Here is a 121-residue protein sequence, read N- to C-terminus: Large ribosomal subunit protein eL8 (121 aa).

The protein belongs to the eukaryotic ribosomal protein eL8 family. As to quaternary structure, part of the 50S ribosomal subunit. Probably part of the RNase P complex.

Its subcellular location is the cytoplasm. In terms of biological role, multifunctional RNA-binding protein that recognizes the K-turn motif in ribosomal RNA, the RNA component of RNase P, box H/ACA, box C/D and box C'/D' sRNAs. The chain is Large ribosomal subunit protein eL8 from Thermoplasma volcanium (strain ATCC 51530 / DSM 4299 / JCM 9571 / NBRC 15438 / GSS1).